The primary structure comprises 614 residues: UvrABC system protein C (614 aa).

One can recognise a GIY-YIG domain in the interval 26-104; the sequence is NLPGVYKMLG…IKEYRPPYNV (79 aa). In terms of domain architecture, UVR spans 215–250; sequence SDIHSALIEKMEASAEELDFEKAVFYRDQLSMLREV.

The protein belongs to the UvrC family. In terms of assembly, interacts with UvrB in an incision complex.

Its subcellular location is the cytoplasm. In terms of biological role, the UvrABC repair system catalyzes the recognition and processing of DNA lesions. UvrC both incises the 5' and 3' sides of the lesion. The N-terminal half is responsible for the 3' incision and the C-terminal half is responsible for the 5' incision. The chain is UvrABC system protein C from Psychrobacter arcticus (strain DSM 17307 / VKM B-2377 / 273-4).